Here is a 976-residue protein sequence, read N- to C-terminus: Apical junction component 1 homolog (976 aa).

The segment at 21 to 49 (ATPGPASKCSPCERSVARPAEPAPFNKRH) is disordered. S52 carries the post-translational modification Phosphoserine. Disordered regions lie at residues 61 to 136 (GPAM…EPAY), 220 to 242 (PQFHGLTVPGPRHMALSRTPTPS), and 264 to 294 (YAERRSLPFTTPPGPTQFFYTEEPQGFRGSF). Residues 98–113 (RAPPGLTPAPASPPVL) show a composition bias toward pro residues. Over residues 116–134 (RGREAQRAARAEASPRREP) the composition is skewed to basic and acidic residues. Residue S129 is modified to Phosphoserine. Residue R322 is modified to Omega-N-methylarginine. The tract at residues 412-443 (LQVVPPSDPDPLLASWHGGTGTSPPRLATDSR) is disordered. 3 positions are modified to phosphoserine: S468, S509, and S512. 2 disordered regions span residues 539–574 (DLRATERPSARAWELPGGRTRPPPHAAPDGPTSGRQ) and 614–660 (LDSR…ADED). Composition is skewed to low complexity over residues 616–625 (SRPAGSGAPA) and 633–655 (PASAGSAEEPAAPGEAADASPEP). R749 is modified (asymmetric dimethylarginine; alternate). R749 is subject to Omega-N-methylarginine; alternate. The disordered stretch occupies residues 855–888 (GSPARPPPARSREPDMETLILTPPPGTAGLDQDG).

The protein resides in the apical cell membrane. The protein localises to the cell projection. It localises to the cilium. It is found in the cell junction. Its subcellular location is the adherens junction. May be involved in the control of adherens junction integrity. The sequence is that of Apical junction component 1 homolog from Homo sapiens (Human).